The following is a 245-amino-acid chain: AA9 family lytic polysaccharide monooxygenase B (245 aa).

Positions 1–18 are cleaved as a signal peptide; it reads MKSAIFAAAVLGAAGVSA. Cu(2+) contacts are provided by histidine 19 and histidine 105. Cysteines 116 and 120 form a disulfide. Residues histidine 179 and glutamine 188 each coordinate O2. Tyrosine 190 is a binding site for Cu(2+).

It belongs to the polysaccharide monooxygenase AA9 family. The cofactor is Cu(2+).

The protein localises to the secreted. The enzyme catalyses [(1-&gt;4)-beta-D-glucosyl]n+m + reduced acceptor + O2 = 4-dehydro-beta-D-glucosyl-[(1-&gt;4)-beta-D-glucosyl]n-1 + [(1-&gt;4)-beta-D-glucosyl]m + acceptor + H2O.. In terms of biological role, lytic polysaccharide monooxygenase (LPMO) that depolymerizes crystalline and amorphous polysaccharides via the oxidation of scissile alpha- or beta-(1-4)-glycosidic bonds, yielding C1 or C4 oxidation products. Catalysis by LPMOs requires the reduction of the active-site copper from Cu(II) to Cu(I) by a reducing agent and H(2)O(2) or O(2) as a cosubstrate. Active on hemicelluloses, including xylan, glucomannan, and xyloglucan. Has no activity on ivory nut mannan (INM), a linear beta-1,4-linked mannan without substitutions. This Malbranchea cinnamomea (Thermophilic fungus) protein is AA9 family lytic polysaccharide monooxygenase B.